Consider the following 133-residue polypeptide: Small ribosomal subunit protein uS8 (133 aa).

This sequence belongs to the universal ribosomal protein uS8 family. As to quaternary structure, part of the 30S ribosomal subunit. Contacts proteins S5 and S12.

Functionally, one of the primary rRNA binding proteins, it binds directly to 16S rRNA central domain where it helps coordinate assembly of the platform of the 30S subunit. The polypeptide is Small ribosomal subunit protein uS8 (Mycoplasmoides gallisepticum (strain R(low / passage 15 / clone 2)) (Mycoplasma gallisepticum)).